Here is an 81-residue protein sequence, read N- to C-terminus: Costars family protein ABRACL (81 aa).

Methionine 1 is modified (N-acetylmethionine).

Belongs to the costars family.

The polypeptide is Costars family protein ABRACL (ABRACL) (Bos taurus (Bovine)).